The chain runs to 314 residues: Caspase-like protein (314 aa).

Belongs to the peptidase C14A family.

Functionally, may be involved in viral replication. This Heliothis virescens ascovirus 3e (HvAV-3e) protein is Caspase-like protein.